A 367-amino-acid chain; its full sequence is Uroporphyrinogen decarboxylase (367 aa).

The residue at position 1 (Met-1) is an N-acetylmethionine. Positions 37, 39, 41, 50, 86, 164, 219, and 339 each coordinate coproporphyrinogen I. Coproporphyrinogen III contacts are provided by Arg-37, Ala-39, and Arg-41. Coproporphyrinogen III is bound by residues Asp-86, Tyr-164, Ser-219, and His-339.

The protein belongs to the uroporphyrinogen decarboxylase family. As to quaternary structure, homodimer.

Its subcellular location is the cytoplasm. The protein resides in the cytosol. The catalysed reaction is uroporphyrinogen III + 4 H(+) = coproporphyrinogen III + 4 CO2. It catalyses the reaction uroporphyrinogen I + 4 H(+) = coproporphyrinogen I + 4 CO2. Its pathway is porphyrin-containing compound metabolism; protoporphyrin-IX biosynthesis; coproporphyrinogen-III from 5-aminolevulinate: step 4/4. Functionally, catalyzes the sequential decarboxylation of the four acetate side chains of uroporphyrinogen to form coproporphyrinogen and participates in the fifth step in the heme biosynthetic pathway. Isomer I or isomer III of uroporphyrinogen may serve as substrate, but only coproporphyrinogen III can ultimately be converted to heme. In vitro also decarboxylates pentacarboxylate porphyrinogen I. The chain is Uroporphyrinogen decarboxylase from Homo sapiens (Human).